The primary structure comprises 157 residues: 6,7-dimethyl-8-ribityllumazine synthase (157 aa).

5-amino-6-(D-ribitylamino)uracil is bound by residues Phe-22, 57 to 59 (AYE), and 81 to 83 (TVI). Residue 86 to 87 (GT) participates in (2S)-2-hydroxy-3-oxobutyl phosphate binding. The active-site Proton donor is the His-89. 5-amino-6-(D-ribitylamino)uracil is bound at residue Phe-114. Arg-128 serves as a coordination point for (2S)-2-hydroxy-3-oxobutyl phosphate.

It belongs to the DMRL synthase family. Forms an icosahedral capsid composed of 60 subunits, arranged as a dodecamer of pentamers.

The catalysed reaction is (2S)-2-hydroxy-3-oxobutyl phosphate + 5-amino-6-(D-ribitylamino)uracil = 6,7-dimethyl-8-(1-D-ribityl)lumazine + phosphate + 2 H2O + H(+). Its pathway is cofactor biosynthesis; riboflavin biosynthesis; riboflavin from 2-hydroxy-3-oxobutyl phosphate and 5-amino-6-(D-ribitylamino)uracil: step 1/2. Catalyzes the formation of 6,7-dimethyl-8-ribityllumazine by condensation of 5-amino-6-(D-ribitylamino)uracil with 3,4-dihydroxy-2-butanone 4-phosphate. This is the penultimate step in the biosynthesis of riboflavin. This Haemophilus influenzae (strain 86-028NP) protein is 6,7-dimethyl-8-ribityllumazine synthase.